A 238-amino-acid chain; its full sequence is Oil body-associated protein 1A (238 aa).

This sequence belongs to the OBAP family. In terms of tissue distribution, expressed in seeds, but not in leaves or roots. Highest expression in scutellum. Detected in embryo axis and endosperm.

Its subcellular location is the lipid droplet. This Zea mays (Maize) protein is Oil body-associated protein 1A.